Consider the following 668-residue polypeptide: tRNA 5-methylaminomethyl-2-thiouridine biosynthesis bifunctional protein MnmC (668 aa).

The segment at 1–245 (MKHYSIQPAN…KREMLCGVME (245 aa)) is tRNA (mnm(5)s(2)U34)-methyltransferase. Positions 270–668 (IGGGIASALL…LLKGKAVKAG (399 aa)) are FAD-dependent cmnm(5)s(2)U34 oxidoreductase.

It in the N-terminal section; belongs to the methyltransferase superfamily. tRNA (mnm(5)s(2)U34)-methyltransferase family. In the C-terminal section; belongs to the DAO family. The cofactor is FAD.

The protein localises to the cytoplasm. The catalysed reaction is 5-aminomethyl-2-thiouridine(34) in tRNA + S-adenosyl-L-methionine = 5-methylaminomethyl-2-thiouridine(34) in tRNA + S-adenosyl-L-homocysteine + H(+). Functionally, catalyzes the last two steps in the biosynthesis of 5-methylaminomethyl-2-thiouridine (mnm(5)s(2)U) at the wobble position (U34) in tRNA. Catalyzes the FAD-dependent demodification of cmnm(5)s(2)U34 to nm(5)s(2)U34, followed by the transfer of a methyl group from S-adenosyl-L-methionine to nm(5)s(2)U34, to form mnm(5)s(2)U34. The protein is tRNA 5-methylaminomethyl-2-thiouridine biosynthesis bifunctional protein MnmC of Shigella dysenteriae serotype 1 (strain Sd197).